A 272-amino-acid polypeptide reads, in one-letter code: Ethanolamine ammonia-lyase small subunit (272 aa).

Adenosylcob(III)alamin contacts are provided by Val161, Glu182, and Cys211.

Belongs to the EutC family. As to quaternary structure, the basic unit is a heterodimer which dimerizes to form tetramers. The heterotetramers trimerize; 6 large subunits form a core ring with 6 small subunits projecting outwards. Adenosylcob(III)alamin is required as a cofactor.

The protein localises to the bacterial microcompartment. The catalysed reaction is ethanolamine = acetaldehyde + NH4(+). It participates in amine and polyamine degradation; ethanolamine degradation. Functionally, catalyzes the deamination of various vicinal amino-alcohols to oxo compounds. Allows this organism to utilize ethanolamine as the sole source of nitrogen and carbon in the presence of external vitamin B12. The polypeptide is Ethanolamine ammonia-lyase small subunit (Pseudomonas putida (strain ATCC 47054 / DSM 6125 / CFBP 8728 / NCIMB 11950 / KT2440)).